A 35-amino-acid polypeptide reads, in one-letter code: Potassium channel toxin alpha-KTx 23.2 (35 aa).

Cystine bridges form between cysteine 6/cysteine 26, cysteine 12/cysteine 31, and cysteine 16/cysteine 33.

It belongs to the short scorpion toxin superfamily. Potassium channel inhibitor family. Alpha-KTx 23 subfamily. In terms of tissue distribution, expressed by the venom gland.

The protein resides in the secreted. In terms of biological role, selectively and irreversibly binds (K(d)=2.9 pM) and blocks Kv1.3/KCNA3 potassium channels of human T-lymphocytes. Weakly blocks Kv1.2/KCNA2 (9%). This Vaejovis mexicanus smithi (Mexican scorpion) protein is Potassium channel toxin alpha-KTx 23.2.